Here is a 797-residue protein sequence, read N- to C-terminus: Protein tamozhennic (797 aa).

Residues 79–146 (QNAIVAFETI…AAEDTFVLEG (68 aa)) form the PUB domain. 2 disordered regions span residues 515-570 (AGGI…ISDL) and 638-697 (LSIT…SAGV). Basic and acidic residues predominate over residues 662 to 679 (EKARTLDKKSGTGRREAK). The RanBP2-type zinc-finger motif lies at 735-766 (IVTSPNEWSCSFCTFLNPDTKRICEMCCRSKD).

Homomultimer. Binds to dl and msl-1 via their nuclear localization signal (NLS). Also binds to Ran, Ran-like and mbo.

The protein resides in the cytoplasm. Has an essential role during oogenesis and embryogenesis, perhaps in modulating the levels of nuclear import of additional proteins. Modulates the nuclear import of dorsal (dl), Dif and male specific lethal 1 (msl-1). Negatively regulates nuclear import of dl and controls the accumulation of dl in the nucleus after immune challenge. The polypeptide is Protein tamozhennic (tamo) (Drosophila melanogaster (Fruit fly)).